The following is a 127-amino-acid chain: Large ribosomal subunit protein bL17 (127 aa).

This sequence belongs to the bacterial ribosomal protein bL17 family. Part of the 50S ribosomal subunit. Contacts protein L32.

This chain is Large ribosomal subunit protein bL17, found in Lactobacillus johnsonii (strain CNCM I-12250 / La1 / NCC 533).